The following is a 324-amino-acid chain: Cathepsin L-like proteinase (324 aa).

The first 16 residues, 1–16 (MKLIIALAALIVVINA), serve as a signal peptide directing secretion. 3 disulfide bridges follow: Cys131-Cys174, Cys165-Cys206, and Cys263-Cys312. Cys134 is an active-site residue. Catalysis depends on residues His270 and Asn290.

Belongs to the peptidase C1 family. Expressed in larval carcasses and gut, and adult gut.

This Phaedon cochleariae (Mustard beetle) protein is Cathepsin L-like proteinase.